We begin with the raw amino-acid sequence, 158 residues long: NAD(P)H-quinone oxidoreductase subunit J, chloroplastic (158 aa).

The protein belongs to the complex I 30 kDa subunit family. As to quaternary structure, NDH is composed of at least 16 different subunits, 5 of which are encoded in the nucleus.

It is found in the plastid. Its subcellular location is the chloroplast thylakoid membrane. The enzyme catalyses a plastoquinone + NADH + (n+1) H(+)(in) = a plastoquinol + NAD(+) + n H(+)(out). The catalysed reaction is a plastoquinone + NADPH + (n+1) H(+)(in) = a plastoquinol + NADP(+) + n H(+)(out). Its function is as follows. NDH shuttles electrons from NAD(P)H:plastoquinone, via FMN and iron-sulfur (Fe-S) centers, to quinones in the photosynthetic chain and possibly in a chloroplast respiratory chain. The immediate electron acceptor for the enzyme in this species is believed to be plastoquinone. Couples the redox reaction to proton translocation, and thus conserves the redox energy in a proton gradient. This Gossypium barbadense (Sea Island cotton) protein is NAD(P)H-quinone oxidoreductase subunit J, chloroplastic.